The primary structure comprises 397 residues: CCA-adding enzyme (397 aa).

ATP contacts are provided by glycine 27 and arginine 30. The CTP site is built by glycine 27 and arginine 30. Mg(2+)-binding residues include aspartate 40 and aspartate 42. The ATP site is built by arginine 111, aspartate 154, arginine 157, arginine 160, and arginine 163. CTP contacts are provided by arginine 111, aspartate 154, arginine 157, arginine 160, and arginine 163.

The protein belongs to the tRNA nucleotidyltransferase/poly(A) polymerase family. Bacterial CCA-adding enzyme type 3 subfamily. Homodimer. Requires Mg(2+) as cofactor.

It catalyses the reaction a tRNA precursor + 2 CTP + ATP = a tRNA with a 3' CCA end + 3 diphosphate. The enzyme catalyses a tRNA with a 3' CCA end + 2 CTP + ATP = a tRNA with a 3' CCACCA end + 3 diphosphate. Functionally, catalyzes the addition and repair of the essential 3'-terminal CCA sequence in tRNAs without using a nucleic acid template. Adds these three nucleotides in the order of C, C, and A to the tRNA nucleotide-73, using CTP and ATP as substrates and producing inorganic pyrophosphate. Has no poly(A) polymerase activity. The chain is CCA-adding enzyme from Bacillus subtilis (strain 168).